The chain runs to 143 residues: Large ribosomal subunit protein uL11 (143 aa).

Belongs to the universal ribosomal protein uL11 family. In terms of assembly, part of the ribosomal stalk of the 50S ribosomal subunit. Interacts with L10 and the large rRNA to form the base of the stalk. L10 forms an elongated spine to which L12 dimers bind in a sequential fashion forming a multimeric L10(L12)X complex. In terms of processing, one or more lysine residues are methylated.

Its function is as follows. Forms part of the ribosomal stalk which helps the ribosome interact with GTP-bound translation factors. The sequence is that of Large ribosomal subunit protein uL11 from Zymomonas mobilis subsp. mobilis (strain ATCC 31821 / ZM4 / CP4).